A 200-amino-acid chain; its full sequence is Mediator of RNA polymerase II transcription subunit 29 (200 aa).

2 stretches are compositionally biased toward low complexity: residues 1–21 (MAASQQQASAASSAAGVSGPS) and 36–48 (AQLVGPAQSGLLQ). Positions 1–48 (MAASQQQASAASSAAGVSGPSSAGGPGPQQQPQPPAQLVGPAQSGLLQ) are disordered. A2 is modified (N-acetylalanine).

This sequence belongs to the Mediator complex subunit 29 family. Component of the Mediator complex, which is composed of MED1, MED4, MED6, MED7, MED8, MED9, MED10, MED11, MED12, MED13, MED13L, MED14, MED15, MED16, MED17, MED18, MED19, MED20, MED21, MED22, MED23, MED24, MED25, MED26, MED27, MED29, MED30, MED31, CCNC, CDK8 and CDC2L6/CDK11. The MED12, MED13, CCNC and CDK8 subunits form a distinct module termed the CDK8 module. Mediator containing the CDK8 module is less active than Mediator lacking this module in supporting transcriptional activation. Individual preparations of the Mediator complex lacking one or more distinct subunits have been variously termed ARC, CRSP, DRIP, PC2, SMCC and TRAP. Associates with the MED18/MED20 heteromer.

The protein resides in the nucleus. Functionally, component of the Mediator complex, a coactivator involved in the regulated transcription of nearly all RNA polymerase II-dependent genes. Mediator functions as a bridge to convey information from gene-specific regulatory proteins to the basal RNA polymerase II transcription machinery. Mediator is recruited to promoters by direct interactions with regulatory proteins and serves as a scaffold for the assembly of a functional preinitiation complex with RNA polymerase II and the general transcription factors. The polypeptide is Mediator of RNA polymerase II transcription subunit 29 (MED29) (Pongo abelii (Sumatran orangutan)).